The sequence spans 930 residues: Isoleucine--tRNA ligase (930 aa).

Positions 57-67 (PYANGNIHVGH) match the 'HIGH' region motif. Glutamate 554 provides a ligand contact to L-isoleucyl-5'-AMP. The 'KMSKS' region signature appears at 595–599 (KMSKS). Lysine 598 lines the ATP pocket. Zn(2+)-binding residues include cysteine 888, cysteine 891, cysteine 908, and cysteine 911.

This sequence belongs to the class-I aminoacyl-tRNA synthetase family. IleS type 1 subfamily. As to quaternary structure, monomer. Zn(2+) serves as cofactor.

It is found in the cytoplasm. It carries out the reaction tRNA(Ile) + L-isoleucine + ATP = L-isoleucyl-tRNA(Ile) + AMP + diphosphate. Its function is as follows. Catalyzes the attachment of isoleucine to tRNA(Ile). As IleRS can inadvertently accommodate and process structurally similar amino acids such as valine, to avoid such errors it has two additional distinct tRNA(Ile)-dependent editing activities. One activity is designated as 'pretransfer' editing and involves the hydrolysis of activated Val-AMP. The other activity is designated 'posttransfer' editing and involves deacylation of mischarged Val-tRNA(Ile). The protein is Isoleucine--tRNA ligase of Streptococcus gordonii (strain Challis / ATCC 35105 / BCRC 15272 / CH1 / DL1 / V288).